A 66-amino-acid polypeptide reads, in one-letter code: Small vasohibin-binding protein (66 aa).

Basic and acidic residues predominate over residues 1–23 (MDPPARKEKTKVKESVSRVEKAK). Positions 1–31 (MDPPARKEKTKVKESVSRVEKAKQKSAQQEL) are disordered. A coiled-coil region spans residues 5 to 52 (ARKEKTKVKESVSRVEKAKQKSAQQELKQRQRAEIYALNRVMTELEQQ).

It belongs to the SVBP family. In terms of assembly, interacts with VASH1 and VASH2.

The protein localises to the cytoplasm. It is found in the secreted. The protein resides in the cytoskeleton. Its function is as follows. Enhances the tyrosine carboxypeptidase activity of VASH1 and VASH2, thereby promoting the removal of the C-terminal tyrosine residue of alpha-tubulin. This activity is critical for spindle function and accurate chromosome segregation during mitosis since microtubule detyronisation regulates mitotic spindle length and postioning. Also required to enhance the solubility and secretion of VASH1 and VASH2. Plays a role in axon and excitatory synapse formation. In Homo sapiens (Human), this protein is Small vasohibin-binding protein.